Consider the following 318-residue polypeptide: D-alanine--D-alanine ligase (318 aa).

The ATP-grasp domain maps to 116 to 311 (KQVWQSLGIP…FQQLVLAILA (196 aa)). Position 142–197 (142–197 (STELGFPLIVKPAHEGSSIGMAKVNSAQELVAAWQDAAKYDSQVLVEQWIHGPEFT)) interacts with ATP. 3 residues coordinate Mg(2+): D265, E278, and N280.

The protein belongs to the D-alanine--D-alanine ligase family. It depends on Mg(2+) as a cofactor. Requires Mn(2+) as cofactor.

It localises to the cytoplasm. It catalyses the reaction 2 D-alanine + ATP = D-alanyl-D-alanine + ADP + phosphate + H(+). It participates in cell wall biogenesis; peptidoglycan biosynthesis. In terms of biological role, cell wall formation. In Pseudomonas putida (strain GB-1), this protein is D-alanine--D-alanine ligase.